The sequence spans 271 residues: Na(+), Li(+), K(+)/H(+) antiporter subunit B (271 aa).

The next 7 membrane-spanning stretches (helical) occupy residues 2 to 22 (ILLT…AIIF), 36 to 56 (LPQV…FLVG), 94 to 114 (WVYL…PSLI), 130 to 150 (PFML…LGTW), 152 to 172 (IVMG…VIIQ), 193 to 213 (STIT…SIPG), and 216 to 236 (ALMD…ITVM). Positions 252–271 (TPHLSYSKAPPPSKGDNNAL) are disordered.

Belongs to the UmpA/UmpB family. Heterodimer composed of UmpA and UmpB.

It localises to the cell membrane. In terms of biological role, part of a two-component antiporter that catalyzes the efflux of Na(+), Li(+) and K(+) in exchange for external protons. Shows a preference for Na(+), followed by K(+) and Li(+). The sequence is that of Na(+), Li(+), K(+)/H(+) antiporter subunit B from Vreelandella zhaodongensis (Halomonas zhaodongensis).